Here is a 241-residue protein sequence, read N- to C-terminus: Carboxysome assembly protein CcmN (241 aa).

Residues 123–206 (GASSPTTDSV…PTAPTVVTTA (84 aa)) form a disordered region. The segment covering 185 to 195 (QISSNRSPGES) has biased composition (polar residues). The segment covering 196–206 (TPTAPTVVTTA) has biased composition (low complexity). The Encapsulation peptide signature appears at 219–241 (VVGQVYINQLLLTLFPERRYFSS).

Belongs to the CcmN family. As to quaternary structure, interacts with full-length and the N-terminal 249 residues of CcmM; a probable CcmM-CcaA-CcmN complex can also be isolated. Interacts with CcmK.

The protein resides in the carboxysome. Functionally, required for carboxysome formation; the N-terminus interacts with CcmM which itself binds RuBisCO (ribulose bisphosphate carboxylase, rbcL-rbcS). May also contact shell protein CcmK to help assemble the carboxysome. Beta-carboxysome assembly initiates when soluble RuBisCO is condensed into a liquid matrix in a pre-carboxysome by the RbcS-like domains of probably both forms of CcmM. CcmN interacts with the N-terminus of full-length CcmM, and then recruits the CcmK major shell protein via CcmN's encapsulation peptide. Shell formation requires CcmK proteins and CcmO. CcmL caps the otherwise elongated carboxysome. Once fully encapsulated carboxysomes are formed, they migrate within the cell probably via interactions with the cytoskeleton. The polypeptide is Carboxysome assembly protein CcmN (Synechocystis sp. (strain ATCC 27184 / PCC 6803 / Kazusa)).